The chain runs to 245 residues: Phosphoribosylaminoimidazole-succinocarboxamide synthase (245 aa).

The protein belongs to the SAICAR synthetase family.

The enzyme catalyses 5-amino-1-(5-phospho-D-ribosyl)imidazole-4-carboxylate + L-aspartate + ATP = (2S)-2-[5-amino-1-(5-phospho-beta-D-ribosyl)imidazole-4-carboxamido]succinate + ADP + phosphate + 2 H(+). It functions in the pathway purine metabolism; IMP biosynthesis via de novo pathway; 5-amino-1-(5-phospho-D-ribosyl)imidazole-4-carboxamide from 5-amino-1-(5-phospho-D-ribosyl)imidazole-4-carboxylate: step 1/2. This chain is Phosphoribosylaminoimidazole-succinocarboxamide synthase, found in Trichormus variabilis (strain ATCC 29413 / PCC 7937) (Anabaena variabilis).